Here is a 117-residue protein sequence, read N- to C-terminus: Large ribosomal subunit protein bL20 (117 aa).

Belongs to the bacterial ribosomal protein bL20 family.

In terms of biological role, binds directly to 23S ribosomal RNA and is necessary for the in vitro assembly process of the 50S ribosomal subunit. It is not involved in the protein synthesizing functions of that subunit. This is Large ribosomal subunit protein bL20 from Campylobacter fetus subsp. fetus (strain 82-40).